The chain runs to 477 residues: Trigger factor (477 aa).

Residues 174 to 261 enclose the PPIase FKBP-type domain; sequence GDIAVVSFKG…LKDLKEKELP (88 aa). A disordered region spans residues 435-477; that stretch reads VNEKTTKTSKATKTSKTTKATKTATKTTKTTKTTKTQNKKEKK. A compositionally biased stretch (low complexity) spans 442 to 470; sequence TSKATKTSKTTKATKTATKTTKTTKTTKT.

It belongs to the FKBP-type PPIase family. Tig subfamily.

It localises to the cytoplasm. The enzyme catalyses [protein]-peptidylproline (omega=180) = [protein]-peptidylproline (omega=0). Its function is as follows. Involved in protein export. Acts as a chaperone by maintaining the newly synthesized protein in an open conformation. Functions as a peptidyl-prolyl cis-trans isomerase. The sequence is that of Trigger factor from Prochlorococcus marinus (strain MIT 9301).